The chain runs to 245 residues: MKVKVVDALGFSYIFKTLSQYVSEATLLFGNDGFKVKGMDPSKVVYIDIFVPKDYFEEYNLENEMKIGVSLKDVNEVIKNVSKEDILYLELEKDKIMFTLDGEYLRTFSLPVLSPDEVETPSINLEFPFRANILTSTFGDLLDEFDQIGGDSIRFKAQNGKLYLSVMGDMGESIVELSLENGGLLESTGTDAESLYGLEHVSNTTKMRRPSDTLEIAFGSQLPLKLRYNLPKGGYADFYIAPRSE.

This sequence belongs to the PCNA family. Homotrimer. The subunits circularize to form a toroid; DNA passes through its center. Replication factor C (RFC) is required to load the toroid on the DNA.

In terms of biological role, sliding clamp subunit that acts as a moving platform for DNA processing. Responsible for tethering the catalytic subunit of DNA polymerase and other proteins to DNA during high-speed replication. This is DNA polymerase sliding clamp 2 from Sulfolobus acidocaldarius (strain ATCC 33909 / DSM 639 / JCM 8929 / NBRC 15157 / NCIMB 11770).